The sequence spans 477 residues: Protein translocase subunit SecY (477 aa).

10 consecutive transmembrane segments (helical) span residues 28–48 (FMIS…LAII), 67–89 (FFSL…AVGI), 130–150 (IITL…ATNS), 165–185 (DFVA…VFLG), 196–216 (GITL…FIAA), 234–254 (AISF…TTFI), 286–306 (SAGV…VTIA), 329–349 (GIVL…YIQI), 387–407 (FIGA…SALI), and 413–433 (LSLG…FMSA).

This sequence belongs to the SecY/SEC61-alpha family. As to quaternary structure, component of the Sec protein translocase complex. Heterotrimer consisting of SecY, SecE and SecG subunits. The heterotrimers can form oligomers, although 1 heterotrimer is thought to be able to translocate proteins. Interacts with the ribosome. Interacts with SecDF, and other proteins may be involved. Interacts with SecA.

Its subcellular location is the cell membrane. In terms of biological role, the central subunit of the protein translocation channel SecYEG. Consists of two halves formed by TMs 1-5 and 6-10. These two domains form a lateral gate at the front which open onto the bilayer between TMs 2 and 7, and are clamped together by SecE at the back. The channel is closed by both a pore ring composed of hydrophobic SecY resides and a short helix (helix 2A) on the extracellular side of the membrane which forms a plug. The plug probably moves laterally to allow the channel to open. The ring and the pore may move independently. The polypeptide is Protein translocase subunit SecY (Mycoplasma pneumoniae (strain ATCC 29342 / M129 / Subtype 1) (Mycoplasmoides pneumoniae)).